The primary structure comprises 183 residues: Pectinesterase inhibitor 8 (183 aa).

A signal peptide spans 1–30 (MAQRASRRPAAAAAAVVVAVVLAVSGGVGA). Cystine bridges form between Cys-36–Cys-51 and Cys-107–Cys-147.

This sequence belongs to the PMEI family.

Its subcellular location is the secreted. It localises to the extracellular space. It is found in the apoplast. In terms of biological role, pectin methylesterase (PME) inhibitor that inhibits PME in vitro. In Oryza sativa subsp. japonica (Rice), this protein is Pectinesterase inhibitor 8.